The primary structure comprises 804 residues: Leucine--tRNA ligase (804 aa).

The 'HIGH' region motif lies at 39–50; it reads PYPSGAGLHVGH. The 'KMSKS' region signature appears at 580 to 584; the sequence is KMSKS. Lys-583 provides a ligand contact to ATP.

This sequence belongs to the class-I aminoacyl-tRNA synthetase family.

It is found in the cytoplasm. The enzyme catalyses tRNA(Leu) + L-leucine + ATP = L-leucyl-tRNA(Leu) + AMP + diphosphate. This is Leucine--tRNA ligase from Mycoplasma capricolum subsp. capricolum (strain California kid / ATCC 27343 / NCTC 10154).